Here is a 634-residue protein sequence, read N- to C-terminus: Chaperone protein HtpG (634 aa).

An a; substrate-binding region spans residues 1–342; the sequence is MTVETDKQTL…SSDLSLNVSR (342 aa). A b region spans residues 343 to 559; it reads EILQSGPVVD…QGDLGLQMRQ (217 aa). Residues 560–634 form a c region; sequence LLEASGQAVP…LNKLLLELSA (75 aa).

The protein belongs to the heat shock protein 90 family. As to quaternary structure, homodimer.

It localises to the cytoplasm. Molecular chaperone. Has ATPase activity. In Xanthomonas axonopodis pv. citri (strain 306), this protein is Chaperone protein HtpG.